Here is a 20-residue protein sequence, read N- to C-terminus: SVAVAGAVIEGATLTFNVLQ.

The interval 3-12 (AVAGAVIEGA) is plays an important role in the hemolytic activity. The segment at 11 to 20 (GATLTFNVLQ) is N-terminal region.

It belongs to the actinoporin family. Sea anemone subfamily. Octamer or nonamer in membranes. Monomer in the soluble state.

It localises to the secreted. The protein resides in the nematocyst. Its subcellular location is the target cell membrane. Functionally, pore-forming protein that forms cations-selective hydrophilic pores of around 1 nm and causes cardiac stimulation and cytolysis. Pore formation is a multi-step process that involves specific recognition of membrane sphingomyelin (but neither cholesterol nor phosphatidylcholine) using aromatic rich region and adjacent phosphocholine (POC) binding site, firm binding to the membrane (mainly driven by hydrophobic interactions) accompanied by the transfer of the N-terminal region to the lipid-water interface and finally pore formation after oligomerization of monomers. Cytolytic effects include red blood cells hemolysis, platelet aggregation and lysis, cytotoxic and cytostatic effects on fibroblasts. Lethality in mammals has been ascribed to severe vasospasm of coronary vessels, cardiac arrhythmia, and inotropic effects. In Actinia equina (Beadlet anemone), this protein is Equinatoxin-1''.